Reading from the N-terminus, the 610-residue chain is UvrABC system protein C (610 aa).

A GIY-YIG domain is found at 13–91 (HLPGVYRMYD…IKENQPKYNV (79 aa)). Residues 201–236 (GQVIEHLVQKMENAAQELDFEAAARFRDQIQSVRAV) form the UVR domain.

This sequence belongs to the UvrC family. As to quaternary structure, interacts with UvrB in an incision complex.

It localises to the cytoplasm. Functionally, the UvrABC repair system catalyzes the recognition and processing of DNA lesions. UvrC both incises the 5' and 3' sides of the lesion. The N-terminal half is responsible for the 3' incision and the C-terminal half is responsible for the 5' incision. The protein is UvrABC system protein C of Actinobacillus pleuropneumoniae serotype 3 (strain JL03).